A 420-amino-acid chain; its full sequence is Phospholipase A1-II 3 (420 aa).

Residues methionine 1–alanine 21 form the signal peptide. N-linked (GlcNAc...) asparagine glycosylation occurs at asparagine 231. Serine 240 functions as the Acyl-ester intermediate in the catalytic mechanism. Catalysis depends on serine 240, which acts as the Charge relay system. An N-linked (GlcNAc...) asparagine glycan is attached at asparagine 294. Residues aspartate 305 and histidine 343 each act as charge relay system in the active site. A coiled-coil region spans residues valine 367–valine 388. N-linked (GlcNAc...) asparagine glycosylation occurs at asparagine 403.

Belongs to the AB hydrolase superfamily. Lipase family.

The protein resides in the secreted. Functionally, acylhydrolase that catalyzes the hydrolysis of phospholipids at the sn-1 position. This Oryza sativa subsp. indica (Rice) protein is Phospholipase A1-II 3.